The following is a 333-amino-acid chain: NADH-quinone oxidoreductase subunit H (333 aa).

Helical transmembrane passes span 15–35, 88–108, 117–137, 159–179, 191–211, 239–259, 274–296, and 313–333; these read FFIF…FVTY, FILA…VIPF, IGVG…GVVT, ISYE…AGSL, VWYI…AVAE, WAFF…LITV, IPGA…WFRV, and VLLP…ELFF.

The protein belongs to the complex I subunit 1 family. As to quaternary structure, NDH-1 is composed of 14 different subunits. Subunits NuoA, H, J, K, L, M, N constitute the membrane sector of the complex.

The protein localises to the cell membrane. The enzyme catalyses a quinone + NADH + 5 H(+)(in) = a quinol + NAD(+) + 4 H(+)(out). In terms of biological role, NDH-1 shuttles electrons from NADH, via FMN and iron-sulfur (Fe-S) centers, to quinones in the respiratory chain. The immediate electron acceptor for the enzyme in this species is believed to be ubiquinone. Couples the redox reaction to proton translocation (for every two electrons transferred, four hydrogen ions are translocated across the cytoplasmic membrane), and thus conserves the redox energy in a proton gradient. This subunit may bind ubiquinone. This Bacillus cereus (strain G9842) protein is NADH-quinone oxidoreductase subunit H.